The sequence spans 138 residues: Probable prefoldin subunit 4 (138 aa).

It belongs to the prefoldin subunit beta family. In terms of assembly, heterohexamer of two PFD-alpha type and four PFD-beta type subunits.

Binds specifically to cytosolic chaperonin (c-CPN) and transfers target proteins to it. Binds to nascent polypeptide chain and promotes folding in an environment in which there are many competing pathways for nonnative proteins. The sequence is that of Probable prefoldin subunit 4 from Drosophila melanogaster (Fruit fly).